Consider the following 102-residue polypeptide: Large ribosomal subunit protein bL21 (102 aa).

Belongs to the bacterial ribosomal protein bL21 family. In terms of assembly, part of the 50S ribosomal subunit. Contacts protein L20.

Its function is as follows. This protein binds to 23S rRNA in the presence of protein L20. The protein is Large ribosomal subunit protein bL21 of Geotalea uraniireducens (strain Rf4) (Geobacter uraniireducens).